The primary structure comprises 160 residues: Transcription elongation factor GreA (160 aa).

The stretch at 43–75 forms a coiled coil; that stretch reads LSENAEYEAAREQQAQMESKIVDLENKLTRASI.

This sequence belongs to the GreA/GreB family.

Necessary for efficient RNA polymerase transcription elongation past template-encoded arresting sites. The arresting sites in DNA have the property of trapping a certain fraction of elongating RNA polymerases that pass through, resulting in locked ternary complexes. Cleavage of the nascent transcript by cleavage factors such as GreA or GreB allows the resumption of elongation from the new 3'terminus. GreA releases sequences of 2 to 3 nucleotides. The polypeptide is Transcription elongation factor GreA (Prosthecochloris aestuarii (strain DSM 271 / SK 413)).